Reading from the N-terminus, the 299-residue chain is Sugar transporter SWEET1 (299 aa).

Positions 7-91 (QVLSISAITT…CVFFLIYSLP (85 aa)) constitute a MtN3/slv 1 domain. Transmembrane regions (helical) follow at residues 8 to 28 (VLSI…IPIC), 36 to 56 (AVGD…SFWL), 67 to 87 (MIIV…FFLI), 95 to 115 (FTCQ…WIAL), 124 to 144 (VICM…LGVV), 155 to 175 (LPMC…GNLV), and 180 to 200 (IIIP…LFVV). The region spanning 121 to 205 (YLGVICMTFN…ALFVVLPIRE (85 aa)) is the MtN3/slv 2 domain. A disordered region spans residues 230-299 (RGDCIVSSPP…DPDLSSIQSP (70 aa)). Basic and acidic residues predominate over residues 247 to 261 (NETRSDVEDKFDKLM). A compositionally biased stretch (low complexity) spans 276–299 (SMGSPPSYKSRSSSDPDLSSIQSP).

The protein belongs to the SWEET sugar transporter family.

The protein resides in the golgi apparatus membrane. It localises to the cell membrane. Functionally, mediates both low-affinity uptake and efflux of sugar across the membrane. This chain is Sugar transporter SWEET1 (swt-1), found in Caenorhabditis elegans.